Reading from the N-terminus, the 508-residue chain is Bifunctional purine biosynthesis protein PurH (508 aa).

In terms of domain architecture, MGS-like spans 1-144 (MTRALLSVSD…KNFASVLPIV (144 aa)).

Belongs to the PurH family.

It carries out the reaction (6R)-10-formyltetrahydrofolate + 5-amino-1-(5-phospho-beta-D-ribosyl)imidazole-4-carboxamide = 5-formamido-1-(5-phospho-D-ribosyl)imidazole-4-carboxamide + (6S)-5,6,7,8-tetrahydrofolate. The catalysed reaction is IMP + H2O = 5-formamido-1-(5-phospho-D-ribosyl)imidazole-4-carboxamide. It participates in purine metabolism; IMP biosynthesis via de novo pathway; 5-formamido-1-(5-phospho-D-ribosyl)imidazole-4-carboxamide from 5-amino-1-(5-phospho-D-ribosyl)imidazole-4-carboxamide (10-formyl THF route): step 1/1. It functions in the pathway purine metabolism; IMP biosynthesis via de novo pathway; IMP from 5-formamido-1-(5-phospho-D-ribosyl)imidazole-4-carboxamide: step 1/1. This Leuconostoc mesenteroides subsp. mesenteroides (strain ATCC 8293 / DSM 20343 / BCRC 11652 / CCM 1803 / JCM 6124 / NCDO 523 / NBRC 100496 / NCIMB 8023 / NCTC 12954 / NRRL B-1118 / 37Y) protein is Bifunctional purine biosynthesis protein PurH.